The following is a 528-amino-acid chain: Negative elongation factor A (528 aa).

One can recognise an HDAg domain in the interval 89–248 (WVLMVADILK…TPIPPSRTLL (160 aa)). Positions 125–188 (REKVGECEAS…LQKSTETAQQ (64 aa)) are NELF-C/D-binding. Phosphothreonine is present on Thr157. The segment at 189–248 (LKRSAGVPFHAKGRGLLRKMDTTTPLKGIPKQAPFRSPTAPSVFSPTGNRTPIPPSRTLL) is RNAPII-binding. Residues 215-245 (KGIPKQAPFRSPTAPSVFSPTGNRTPIPPSR) form a disordered region. A phosphoserine mark is found at Ser225 and Ser233. The segment covering 227-238 (TAPSVFSPTGNR) has biased composition (polar residues). Thr277 bears the Phosphothreonine mark. The span at 320–341 (PSTSYLPSTPSVVPASSYIPSS) shows a compositional bias: low complexity. The tract at residues 320-409 (PSTSYLPSTP…PPAVAPTTQT (90 aa)) is disordered. Ser363 carries the post-translational modification Phosphoserine.

Belongs to the NELF-A family. As to quaternary structure, the NELF complex is composed of NELFA, NELFB, NELFCD (isoform NELF-C or isoform NELF-D) and NELFE; NELFA and NELFCD form a stable subcomplex that binds to the N-terminus of NELFB. In vitro, the NELFA:NELFCD subcomplex binds to ssDNA and ssRNA in a sequence- and structure-dependent manner. Interacts with the RNA polymerase II complex when it is not phosphorylated by P-TEFb. Ubiquitous. Expressed in heart, brain, placenta, liver, skeletal muscle, kidney and pancreas. Expressed at lower level in adult lung. Expressed in fetal brain, lung, liver and kidney.

It is found in the nucleus. Essential component of the NELF complex, a complex that negatively regulates the elongation of transcription by RNA polymerase II. The NELF complex, which acts via an association with the DSIF complex and causes transcriptional pausing, is counteracted by the P-TEFb kinase complex. In terms of biological role, (Microbial infection) The NELF complex is involved in HIV-1 latency possibly involving recruitment of PCF11 to paused RNA polymerase II. The protein is Negative elongation factor A (NELFA) of Homo sapiens (Human).